A 427-amino-acid polypeptide reads, in one-letter code: Serine--tRNA ligase (427 aa).

231–233 (TAE) contributes to the L-serine binding site. Residue 262 to 264 (RSE) coordinates ATP. Glu285 contributes to the L-serine binding site. 349 to 352 (EISS) is an ATP binding site. Position 385 (Ser385) interacts with L-serine.

The protein belongs to the class-II aminoacyl-tRNA synthetase family. Type-1 seryl-tRNA synthetase subfamily. In terms of assembly, homodimer. The tRNA molecule binds across the dimer.

It is found in the cytoplasm. It carries out the reaction tRNA(Ser) + L-serine + ATP = L-seryl-tRNA(Ser) + AMP + diphosphate + H(+). It catalyses the reaction tRNA(Sec) + L-serine + ATP = L-seryl-tRNA(Sec) + AMP + diphosphate + H(+). It participates in aminoacyl-tRNA biosynthesis; selenocysteinyl-tRNA(Sec) biosynthesis; L-seryl-tRNA(Sec) from L-serine and tRNA(Sec): step 1/1. Catalyzes the attachment of serine to tRNA(Ser). Is also able to aminoacylate tRNA(Sec) with serine, to form the misacylated tRNA L-seryl-tRNA(Sec), which will be further converted into selenocysteinyl-tRNA(Sec). This is Serine--tRNA ligase from Listeria innocua serovar 6a (strain ATCC BAA-680 / CLIP 11262).